The sequence spans 286 residues: Shikimate dehydrogenase (NADP(+)) (286 aa).

Shikimate is bound by residues Thr21 to Ser23 and Thr68. Residue Lys72 is the Proton acceptor of the active site. An NADP(+)-binding site is contributed by Asp84. Shikimate is bound by residues Asn93 and Asp108. NADP(+) contacts are provided by residues Gly132–Ala136 and Leu226. Tyr228 serves as a coordination point for shikimate. An NADP(+)-binding site is contributed by Gly249.

Belongs to the shikimate dehydrogenase family. Homodimer.

It catalyses the reaction shikimate + NADP(+) = 3-dehydroshikimate + NADPH + H(+). It participates in metabolic intermediate biosynthesis; chorismate biosynthesis; chorismate from D-erythrose 4-phosphate and phosphoenolpyruvate: step 4/7. In terms of biological role, involved in the biosynthesis of the chorismate, which leads to the biosynthesis of aromatic amino acids. Catalyzes the reversible NADPH linked reduction of 3-dehydroshikimate (DHSA) to yield shikimate (SA). This Thermosynechococcus vestitus (strain NIES-2133 / IAM M-273 / BP-1) protein is Shikimate dehydrogenase (NADP(+)).